The sequence spans 285 residues: Shikimate dehydrogenase (NADP(+)) (285 aa).

Residues 19 to 21 (SLS) and T66 contribute to the shikimate site. Catalysis depends on K70, which acts as the Proton acceptor. The shikimate site is built by N91 and D107. NADP(+) contacts are provided by residues 129–133 (GSGGA) and L228. Y230 is a shikimate binding site. Residue G251 participates in NADP(+) binding.

The protein belongs to the shikimate dehydrogenase family. In terms of assembly, homodimer.

The enzyme catalyses shikimate + NADP(+) = 3-dehydroshikimate + NADPH + H(+). The protein operates within metabolic intermediate biosynthesis; chorismate biosynthesis; chorismate from D-erythrose 4-phosphate and phosphoenolpyruvate: step 4/7. Its function is as follows. Involved in the biosynthesis of the chorismate, which leads to the biosynthesis of aromatic amino acids. Catalyzes the reversible NADPH linked reduction of 3-dehydroshikimate (DHSA) to yield shikimate (SA). The polypeptide is Shikimate dehydrogenase (NADP(+)) (Prochlorococcus marinus (strain MIT 9515)).